The chain runs to 347 residues: MIPDNRSQQGSLPPTIFLMGPTASGKTDLAIELCRTLPCEIISVDSAMVYRGMDIGTAKPSPEELALAPHRLIDICDPADTYSAADFRRDALAAMSEISGRGRIPLLVGGTMMYFKALLHGMSNLPSANQALRAEIEREAERDGWGALHEELAEKDPDAARLIHPNNRQRLMRAIEVIRLTDKPISSFWQSESGTSGQHPQSGIEDYTYFTSWQADESAGLPYTVFQFALAPAERSVLHSRIQKRFLAMLEAGFLDEVRALMARGDLSPDLPSMRCVGYRQAWDYLSGNEDYDSFVAKGVAATRQLAKRQLTWLRKWRDVHWLDSADPQVVLDTLKKSGLHTTFNFE.

ATP is bound at residue 20-27; that stretch reads GPTASGKT. 22-27 lines the substrate pocket; that stretch reads TASGKT. Interaction with substrate tRNA regions lie at residues 45–48, 169–173, and 275–280; these read DSAM, QRLMR, and RCVGYR.

The protein belongs to the IPP transferase family. Monomer. The cofactor is Mg(2+).

The catalysed reaction is adenosine(37) in tRNA + dimethylallyl diphosphate = N(6)-dimethylallyladenosine(37) in tRNA + diphosphate. Catalyzes the transfer of a dimethylallyl group onto the adenine at position 37 in tRNAs that read codons beginning with uridine, leading to the formation of N6-(dimethylallyl)adenosine (i(6)A). The chain is tRNA dimethylallyltransferase from Marinobacter nauticus (strain ATCC 700491 / DSM 11845 / VT8) (Marinobacter aquaeolei).